The sequence spans 294 residues: Tryptophan 2,3-dioxygenase (294 aa).

Residues 63-67, Tyr125, and Arg129 each bind substrate; that span reads FIIQH. Heme is bound at residue His252. Residue Thr266 participates in substrate binding.

It belongs to the tryptophan 2,3-dioxygenase family. Homotetramer. Requires heme as cofactor.

The enzyme catalyses L-tryptophan + O2 = N-formyl-L-kynurenine. It functions in the pathway amino-acid degradation; L-tryptophan degradation via kynurenine pathway; L-kynurenine from L-tryptophan: step 1/2. In terms of biological role, heme-dependent dioxygenase that catalyzes the oxidative cleavage of the L-tryptophan (L-Trp) pyrrole ring and converts L-tryptophan to N-formyl-L-kynurenine. Catalyzes the oxidative cleavage of the indole moiety. This chain is Tryptophan 2,3-dioxygenase, found in Polaromonas sp. (strain JS666 / ATCC BAA-500).